The sequence spans 370 residues: Uroporphyrinogen decarboxylase (370 aa).

Substrate is bound by residues 29-33 (RQAGR), aspartate 79, tyrosine 155, serine 210, and histidine 342.

The protein belongs to the uroporphyrinogen decarboxylase family. In terms of assembly, homodimer.

The protein localises to the cytoplasm. It catalyses the reaction uroporphyrinogen III + 4 H(+) = coproporphyrinogen III + 4 CO2. Its pathway is porphyrin-containing compound metabolism; protoporphyrin-IX biosynthesis; coproporphyrinogen-III from 5-aminolevulinate: step 4/4. Functionally, catalyzes the decarboxylation of four acetate groups of uroporphyrinogen-III to yield coproporphyrinogen-III. This chain is Uroporphyrinogen decarboxylase, found in Delftia acidovorans (strain DSM 14801 / SPH-1).